We begin with the raw amino-acid sequence, 152 residues long: UPF0266 membrane protein YobD (152 aa).

3 helical membrane passes run 6–26 (LVLILFIAALLAYALYDQFIM), 45–65 (VDSVIFVGLVAILIYNNVTSH), and 67–87 (AQMTTWLLSALALMGFYIFWI).

This sequence belongs to the UPF0266 family.

The protein resides in the cell inner membrane. This Salmonella paratyphi B (strain ATCC BAA-1250 / SPB7) protein is UPF0266 membrane protein YobD.